The chain runs to 284 residues: MKRGCAIAVMICGLITSVSAASAADLIVQEPVFEPLPQPALAGWYLRGDIGYNFKSKTGGKWDFWNQFEEPYRGVDDTFNYDDFSLKGGASYGVGVGYRFNDMLRTDLTLDYFRASINGRTNCRSYVKSSHGLNPVEDNCHYEDNSKASVWTAMANAYVDLPRVGPLTPYLGAGIGAAYVKYDTWKTSEICPTCTLQSDKDGFDSWRFAMALMAGVSYDLTDQLKLDLGYRYLRVNGGNAYGYDEQDRQVINQYGQGAGADGPQAKDNGFNIHTVRAGLRYEFR.

The N-terminal stretch at 1-23 is a signal peptide; sequence MKRGCAIAVMICGLITSVSAASA.

The protein belongs to the surface antigen msp4 family.

This is an uncharacterized protein from Brucella abortus (strain 2308).